The chain runs to 82 residues: Small ribosomal subunit protein bS18 (82 aa).

It belongs to the bacterial ribosomal protein bS18 family. In terms of assembly, part of the 30S ribosomal subunit. Forms a tight heterodimer with protein bS6.

In terms of biological role, binds as a heterodimer with protein bS6 to the central domain of the 16S rRNA, where it helps stabilize the platform of the 30S subunit. This is Small ribosomal subunit protein bS18 from Bifidobacterium longum (strain NCC 2705).